We begin with the raw amino-acid sequence, 219 residues long: Large ribosomal subunit protein uL4 (219 aa).

The segment at 45–103 (ARRQGTHATKTRGQVRGGGRKPYRQKGTGRARQGSIRAPQFTGGGTVHGPQPRDYDQRT) is disordered. Basic residues predominate over residues 62–73 (GGRKPYRQKGTG).

This sequence belongs to the universal ribosomal protein uL4 family. In terms of assembly, part of the 50S ribosomal subunit.

One of the primary rRNA binding proteins, this protein initially binds near the 5'-end of the 23S rRNA. It is important during the early stages of 50S assembly. It makes multiple contacts with different domains of the 23S rRNA in the assembled 50S subunit and ribosome. Functionally, forms part of the polypeptide exit tunnel. The polypeptide is Large ribosomal subunit protein uL4 (Corynebacterium kroppenstedtii (strain DSM 44385 / JCM 11950 / CIP 105744 / CCUG 35717)).